A 79-amino-acid chain; its full sequence is CDC42 small effector protein 1 (79 aa).

2 S-palmitoyl cysteine lipidation sites follow: Cys10 and Cys11. The CRIB domain maps to 30 to 43; sequence IGEPMNFVHLTHIG. A disordered region spans residues 41–79; it reads HIGSGDMGASDGLPRAGGVQEQMRSKCGRDRQWSNSGVL. Over residues 63 to 72 the composition is skewed to basic and acidic residues; sequence MRSKCGRDRQ.

Belongs to the CDC42SE/SPEC family.

The protein resides in the cytoplasm. Its subcellular location is the cytoskeleton. The protein localises to the cell membrane. Its function is as follows. Probably involved in the organization of the actin cytoskeleton by acting downstream of CDC42, inducing actin filament assembly. The polypeptide is CDC42 small effector protein 1 (cdc42se1) (Xenopus tropicalis (Western clawed frog)).